The chain runs to 436 residues: ATP-dependent protease ATPase subunit HslU (436 aa).

Residues I19, 61 to 65 (GVGKT), D249, E314, and R386 contribute to the ATP site.

Belongs to the ClpX chaperone family. HslU subfamily. As to quaternary structure, a double ring-shaped homohexamer of HslV is capped on each side by a ring-shaped HslU homohexamer. The assembly of the HslU/HslV complex is dependent on binding of ATP.

The protein resides in the cytoplasm. In terms of biological role, ATPase subunit of a proteasome-like degradation complex; this subunit has chaperone activity. The binding of ATP and its subsequent hydrolysis by HslU are essential for unfolding of protein substrates subsequently hydrolyzed by HslV. HslU recognizes the N-terminal part of its protein substrates and unfolds these before they are guided to HslV for hydrolysis. This chain is ATP-dependent protease ATPase subunit HslU, found in Bartonella henselae (strain ATCC 49882 / DSM 28221 / CCUG 30454 / Houston 1) (Rochalimaea henselae).